The following is a 385-amino-acid chain: Sensor histidine kinase Hik2 (385 aa).

In terms of domain architecture, GAF spans 11–131; it reads ALCRTQLELV…QQVAQTLAIA (121 aa). Cysteine 13 provides a ligand contact to [3Fe-4S] cluster. Residues 142–270 are DHp domain, may sense NaCl; that stretch reads SHSPAQPLDQ…PQLPPIWLEE (129 aa). The Histidine kinase domain occupies 158–381; the sequence is DLLHQLRNPV…AFTLAIPWQM (224 aa). At histidine 161 the chain carries Phosphohistidine; by autocatalysis.

Belongs to the chloroplast sensor kinase protein family. As to quaternary structure, hexamers; upon treatment with 0.5 M NaCl only tetramers are seen. The tetramers are probably inactive. [3Fe-4S] cluster is required as a cofactor. Post-translationally, autophosphorylates, possibly on His-161.

The enzyme catalyses ATP + protein L-histidine = ADP + protein N-phospho-L-histidine.. Functionally, member of 2 two-component regulatory system(s) Hik2/Rre1 and Hik2/RppA. Transduces PQ (plastoquinone) redox signals to photosystem gene expression machinery during the adjustment of photosystem stoichiometry. Reduced PQ suppresses its autophosphorylation activity (i.e. kinase activity is higher under oxidizing conditions). As part of a two-component regulatory system with Rre1, controls expression of sigB and several other genes in response to hyperosmotic stress. May transfer phosphate to RppA in a possible Hik2/RppA two-component system. The polypeptide is Sensor histidine kinase Hik2 (Thermosynechococcus vestitus (strain NIES-2133 / IAM M-273 / BP-1)).